The following is a 443-amino-acid chain: Probable glycine dehydrogenase (decarboxylating) subunit 1 (443 aa).

Belongs to the GcvP family. N-terminal subunit subfamily. As to quaternary structure, the glycine cleavage system is composed of four proteins: P, T, L and H. In this organism, the P 'protein' is a heterodimer of two subunits.

The catalysed reaction is N(6)-[(R)-lipoyl]-L-lysyl-[glycine-cleavage complex H protein] + glycine + H(+) = N(6)-[(R)-S(8)-aminomethyldihydrolipoyl]-L-lysyl-[glycine-cleavage complex H protein] + CO2. Its function is as follows. The glycine cleavage system catalyzes the degradation of glycine. The P protein binds the alpha-amino group of glycine through its pyridoxal phosphate cofactor; CO(2) is released and the remaining methylamine moiety is then transferred to the lipoamide cofactor of the H protein. The sequence is that of Probable glycine dehydrogenase (decarboxylating) subunit 1 from Oleidesulfovibrio alaskensis (strain ATCC BAA-1058 / DSM 17464 / G20) (Desulfovibrio alaskensis).